The primary structure comprises 304 residues: Calcium release-activated calcium channel protein 1 (304 aa).

Over residues 1 to 11 the composition is skewed to pro residues; that stretch reads MHPEPAPPPNN. The segment at 1–49 is disordered; that stretch reads MHPEPAPPPNNSNPELPLSGGSSTSGSRRSRRRSGDGEPTGAPPLPPPP. Topologically, residues 1 to 88 are cytoplasmic; the sequence is MHPEPAPPPN…KLYLSRAKLK (88 aa). A required for generation of inwardly rectifying CRAC currents region spans residues 3–49; the sequence is PEPAPPPNNSNPELPLSGGSSTSGSRRSRRRSGDGEPTGAPPLPPPP. A compositionally biased stretch (low complexity) spans 12 to 27; it reads SNPELPLSGGSSTSGS. The interval 39–60 is AKAP5 association region; sequence PTGAPPLPPPPAVSYPDWIGQS. An interaction with STIM1 region spans residues 71 to 91; sequence SMQALSWRKLYLSRAKLKASS. A helical membrane pass occupies residues 89–106; sequence ASSRTSALLSGFAMVAMV. Topologically, residues 107–120 are extracellular; the sequence is EVQLDTDHDYPPGL. The helical transmembrane segment at 121–141 threads the bilayer; it reads LIVFSACTTVLVAVHLFALMI. The Cytoplasmic portion of the chain corresponds to 142–174; that stretch reads STCILPNIEAVSNVHNLNSVKESPHERMHRHIE. The chain crosses the membrane as a helical span at residues 175 to 195; sequence LAWAFSTVIGTLLFLAEVVLL. Topologically, residues 196–237 are extracellular; that stretch reads CWVKFLPLKRQAGQPSPTKPPTEPAVVVANSSNNGGITPGEA. A glycan (N-linked (GlcNAc...) asparagine) is linked at Asn225. Residues 238–258 traverse the membrane as a helical segment; it reads AAIASTAIMVPCGLVFIVFAV. Residues 259–304 are Cytoplasmic-facing; the sequence is HFYRSLVSHKTDRQFQELNELAEFARLQDQLDHRGDHSLTPGTHYA. The segment at 275 to 295 is interaction with STIM1; the sequence is ELNELAEFARLQDQLDHRGDH. The residue at position 298 (Thr298) is a Phosphothreonine.

The protein belongs to the Orai family. As to quaternary structure, oligomerizes in homomeric and heteromeric ORAI complexes. Native CRAC channels most likely consist of hexameric ORAI heteromers, implying that diverse ORAI1, ORAI2 and ORAI3 subunit combinations with distinct biophysical properties can operate in a cell-type specific way. ARC channels are heteropentamers consisting of three ORAI1 and two ORAI3 subunits. Interacts with STIM1 and STIM2; this regulates channel activity. Interacts with CALM; this may displace STIM1 and STIM2 and might thereby modulate channel activity. Interacts (via N-terminus) with AKAP5 upon store depletion. Interacts with CRACR2A/EFCAB4B; the interaction is direct and takes place in absence of Ca(2+). Forms a complex with CRACR2A/EFCAB4B and STIM1 at low concentration of Ca(2+), the complex dissociates at elevated Ca(2+) concentrations. Interacts with ASPH (isoform 8). Interacts with SLC35G1. Interacts with UBQLN1. Interacts with ADCY8; interaction is calcium store depletion independent; interaction occurs in membrane raft; interaction increases markedly after store depletion; positively regulates SOCE-induced adenylate cyclase activity; contributes to the targeting of ADCY8 to discrete regions of the plasma membrane that are shielded from other calcium events. Interacts with EFHB; the interaction takes place upon Ca(2+)-store depletion. Interacts (via N- and C-termini) with ATP2C2 (via N-terminus); this interaction regulates Ca(2+) influx at the plasma membrane. Interacts with TSPAN18; this interaction regulates ORAI1 exit from the endoplasmic (ER), and/or Golgi, and trafficking to the cell surface. In terms of processing, N-glycosylated. N-glycosylation inhibits channel activity in T cells. Ubiquitinated. Post-translationally, cys-195 is oxidated, leading to inactivation of channel activity.

Its subcellular location is the cell membrane. It is found in the basolateral cell membrane. It catalyses the reaction Ca(2+)(in) = Ca(2+)(out). With respect to regulation, oxidation at Cys-196 leads to inactivation of channel activity. Its function is as follows. Pore-forming subunit of two major inward rectifying Ca(2+) channels at the plasma membrane: Ca(2+) release-activated Ca(2+) (CRAC) channels and arachidonate-regulated Ca(2+)-selective (ARC) channels. Assembles with ORAI2 and ORAI3 to form hexameric CRAC channels that mediate Ca(2+) influx upon depletion of endoplasmic reticulum Ca(2+) store and channel activation by Ca(2+) sensor STIM1, a process known as store-operated Ca(2+) entry (SOCE). Various pore subunit combinations may account for distinct CRAC channel spatiotemporal and cell-type specific dynamics. ORAI1 mainly contributes to the generation of Ca(2+) plateaus involved in sustained Ca(2+) entry and is dispensable for cytosolic Ca(2+) oscillations, whereas ORAI2 and ORAI3 generate oscillatory patterns. CRAC channels assemble in Ca(2+) signaling microdomains where Ca(2+) influx is coupled to calmodulin and calcineurin signaling and activation of NFAT transcription factors recruited to ORAI1 via AKAP5. Activates NFATC2/NFAT1 and NFATC3/NFAT4-mediated transcriptional responses. CRAC channels are the main pathway for Ca(2+) influx in T cells and promote the immune response to pathogens by activating NFAT-dependent cytokine and chemokine transcription. Assembles with ORAI3 to form channels that mediate store-independent Ca(2+) influx in response to inflammatory metabolites arachidonate or its derivative leukotriene C4, termed ARC and LRC channels respectively. Plays a prominent role in Ca(2+) influx at the basolateral membrane of mammary epithelial cells independently of the Ca(2+) content of endoplasmic reticulum or Golgi stores. May mediate transepithelial transport of large quantities of Ca(2+) for milk secretion. The sequence is that of Calcium release-activated calcium channel protein 1 (Orai1) from Rattus norvegicus (Rat).